Reading from the N-terminus, the 77-residue chain is Liver-expressed antimicrobial peptide 2 (77 aa).

The first 22 residues, 1–22 (MWHLKLFAVLVICLLLAVQVHG), serve as a signal peptide directing secretion. Positions 23–37 (SPIPELSSAKRRPRR) are excised as a propeptide. 2 disulfide bridges follow: Cys54/Cys65 and Cys60/Cys70.

The protein belongs to the LEAP2 family.

It localises to the secreted. Its function is as follows. Has an antimicrobial activity. The chain is Liver-expressed antimicrobial peptide 2 (LEAP2) from Sus scrofa (Pig).